The sequence spans 390 residues: GTPase Obg (390 aa).

An Obg domain is found at 1–159 (MKFVDEAVVK…REIRLELLLL (159 aa)). One can recognise an OBG-type G domain in the interval 160–333 (ADVGMLGLPN…LCYKLADFME (174 aa)). GTP is bound by residues 166–173 (GLPNAGKS), 191–195 (FTTLI), 213–216 (DIPG), 283–286 (NKVD), and 314–316 (SAI). 2 residues coordinate Mg(2+): serine 173 and threonine 193. The span at 367–382 (TEDDDDWDDWDDEEDD) shows a compositional bias: acidic residues. The disordered stretch occupies residues 367 to 390 (TEDDDDWDDWDDEEDDGHVVYVRD).

This sequence belongs to the TRAFAC class OBG-HflX-like GTPase superfamily. OBG GTPase family. In terms of assembly, monomer. Requires Mg(2+) as cofactor.

The protein resides in the cytoplasm. Functionally, an essential GTPase which binds GTP, GDP and possibly (p)ppGpp with moderate affinity, with high nucleotide exchange rates and a fairly low GTP hydrolysis rate. Plays a role in control of the cell cycle, stress response, ribosome biogenesis and in those bacteria that undergo differentiation, in morphogenesis control. The protein is GTPase Obg of Vibrio parahaemolyticus serotype O3:K6 (strain RIMD 2210633).